Reading from the N-terminus, the 253-residue chain is MAGHSKWANIKRQKARVDAVKGKVFAKVSRQIIVAARSGADPAGNFQLRTAIEKAKTVGIPNDNIERAIAKGSGQLNDGSQLEEIRYEGYGAGGIAIIIEALTDNRNRTAADLRSAFTKNGGNLGETGCVSWMFDQKGVVSITGSYDEDELLEASVEGEAEYYEVIAEDDFQGVEVFTETTNLENLSQVLQEKGFDISEVEFRWVSAHTIEVSDPEQARSLLKLMDALDDLDDVQNITANFDIANKLLKTLAS.

Belongs to the TACO1 family.

It localises to the cytoplasm. In Trichodesmium erythraeum (strain IMS101), this protein is Probable transcriptional regulatory protein Tery_2125.